Here is a 94-residue protein sequence, read N- to C-terminus: Aspartyl/glutamyl-tRNA(Asn/Gln) amidotransferase subunit C (94 aa).

This sequence belongs to the GatC family. As to quaternary structure, heterotrimer of A, B and C subunits.

It catalyses the reaction L-glutamyl-tRNA(Gln) + L-glutamine + ATP + H2O = L-glutaminyl-tRNA(Gln) + L-glutamate + ADP + phosphate + H(+). It carries out the reaction L-aspartyl-tRNA(Asn) + L-glutamine + ATP + H2O = L-asparaginyl-tRNA(Asn) + L-glutamate + ADP + phosphate + 2 H(+). In terms of biological role, allows the formation of correctly charged Asn-tRNA(Asn) or Gln-tRNA(Gln) through the transamidation of misacylated Asp-tRNA(Asn) or Glu-tRNA(Gln) in organisms which lack either or both of asparaginyl-tRNA or glutaminyl-tRNA synthetases. The reaction takes place in the presence of glutamine and ATP through an activated phospho-Asp-tRNA(Asn) or phospho-Glu-tRNA(Gln). The protein is Aspartyl/glutamyl-tRNA(Asn/Gln) amidotransferase subunit C of Opitutus terrae (strain DSM 11246 / JCM 15787 / PB90-1).